A 353-amino-acid polypeptide reads, in one-letter code: S-adenosylmethionine:tRNA ribosyltransferase-isomerase (353 aa).

It belongs to the QueA family. In terms of assembly, monomer.

It is found in the cytoplasm. The catalysed reaction is 7-aminomethyl-7-carbaguanosine(34) in tRNA + S-adenosyl-L-methionine = epoxyqueuosine(34) in tRNA + adenine + L-methionine + 2 H(+). It functions in the pathway tRNA modification; tRNA-queuosine biosynthesis. Functionally, transfers and isomerizes the ribose moiety from AdoMet to the 7-aminomethyl group of 7-deazaguanine (preQ1-tRNA) to give epoxyqueuosine (oQ-tRNA). The chain is S-adenosylmethionine:tRNA ribosyltransferase-isomerase from Maricaulis maris (strain MCS10) (Caulobacter maris).